Here is a 236-residue protein sequence, read N- to C-terminus: uncharacterized protein (236 aa).

Disordered stretches follow at residues 1–48 (MHLR…RTFS), 67–122 (VHTP…HSPR), and 134–192 (KLHP…PNNT). Over residues 85–99 (RAHRTAKHPARRQSC) the composition is skewed to basic residues. The segment covering 180–189 (PSPAIKPSPP) has biased composition (pro residues).

This is an uncharacterized protein from Encephalitozoon cuniculi (strain GB-M1) (Microsporidian parasite).